Consider the following 604-residue polypeptide: Asparagine synthetase [glutamine-hydrolyzing] 1 (604 aa).

Cysteine 2 functions as the Nucleophile in the catalytic mechanism. Residues 2–186 (CGILAVLGAA…PGHLYSSAAG (185 aa)) form the Glutamine amidotransferase type-2 domain. Residues 50-54 (RLAIV), 75-77 (NGE), and aspartate 99 each bind L-glutamine. Positions 211 to 451 (LREAFEKAVI…LPKHILYRQK (241 aa)) constitute an Asparagine synthetase domain. Residues leucine 232, valine 268, and 342–343 (SG) contribute to the ATP site.

The catalysed reaction is L-aspartate + L-glutamine + ATP + H2O = L-asparagine + L-glutamate + AMP + diphosphate + H(+). It functions in the pathway amino-acid biosynthesis; L-asparagine biosynthesis. Essential for nitrogen assimilation, distribution and remobilization within the plant via the phloem. This chain is Asparagine synthetase [glutamine-hydrolyzing] 1, found in Oryza sativa subsp. japonica (Rice).